Reading from the N-terminus, the 361-residue chain is Protein RecA (361 aa).

ATP is bound at residue 68–75 (GPESSGKT). A disordered region spans residues 342 to 361 (PEGAKENISAKDDVAVDTKE). Basic and acidic residues predominate over residues 344–361 (GAKENISAKDDVAVDTKE).

It belongs to the RecA family.

The protein resides in the cytoplasm. Its function is as follows. Can catalyze the hydrolysis of ATP in the presence of single-stranded DNA, the ATP-dependent uptake of single-stranded DNA by duplex DNA, and the ATP-dependent hybridization of homologous single-stranded DNAs. It interacts with LexA causing its activation and leading to its autocatalytic cleavage. The polypeptide is Protein RecA (Clostridium beijerinckii (strain ATCC 51743 / NCIMB 8052) (Clostridium acetobutylicum)).